The sequence spans 159 residues: NAD(P)H-quinone oxidoreductase subunit J, chloroplastic (159 aa).

It belongs to the complex I 30 kDa subunit family. NDH is composed of at least 16 different subunits, 5 of which are encoded in the nucleus.

The protein resides in the plastid. It is found in the chloroplast thylakoid membrane. It carries out the reaction a plastoquinone + NADH + (n+1) H(+)(in) = a plastoquinol + NAD(+) + n H(+)(out). The catalysed reaction is a plastoquinone + NADPH + (n+1) H(+)(in) = a plastoquinol + NADP(+) + n H(+)(out). Functionally, NDH shuttles electrons from NAD(P)H:plastoquinone, via FMN and iron-sulfur (Fe-S) centers, to quinones in the photosynthetic chain and possibly in a chloroplast respiratory chain. The immediate electron acceptor for the enzyme in this species is believed to be plastoquinone. Couples the redox reaction to proton translocation, and thus conserves the redox energy in a proton gradient. This Triticum aestivum (Wheat) protein is NAD(P)H-quinone oxidoreductase subunit J, chloroplastic.